We begin with the raw amino-acid sequence, 493 residues long: Sodium-coupled neutral amino acid symporter 2 (493 aa).

Residues 1–72 (MNNAEVLNVA…LPGTTSFGMS (72 aa)) lie on the Cytoplasmic side of the membrane. Positions 1 to 92 (MNNAEVLNVA…SGILGLSYAM (92 aa)) are regulates protein turnover upon amino acid deprivation. Residues 73–92 (VFNLSNAIVGSGILGLSYAM) form a helical membrane-spanning segment. Residue Asn-78 participates in Na(+) binding. Over 93–98 (ANTGIA) the chain is Extracellular. Residues 99–119 (LFMILLVFVTVFSLYSIHLLL) form a helical membrane-spanning segment. The Cytoplasmic portion of the chain corresponds to 120-154 (KTANEGGSLLYEQLGLKAFGIPGKLAASGSVTLQN). The helical transmembrane segment at 155-173 (IGAMSSYLYIVKYELPLVI) threads the bilayer. Residues 174 to 184 (KALMDIKESNG) are Extracellular-facing. The chain crosses the membrane as a helical span at residues 185–205 (EWYLNGDYLVIMVSLAIILPL). Residues 206-213 (SLLRNLGY) lie on the Cytoplasmic side of the membrane. The helical transmembrane segment at 214-234 (LGYTSGFSPLCMVFFLIVVIY) threads the bilayer. The Extracellular portion of the chain corresponds to 235-279 (KKFEIPCPLEAMNMTSNSSSHDHMAHNETDDEMCKPKYFVFNSQT). A disulfide bond links Cys-241 and Cys-268. N-linked (GlcNAc...) asparagine glycosylation is found at Asn-247, Asn-251, and Asn-261. A helical transmembrane segment spans residues 280-300 (VYAVPILTFSFVCHPAVLPIY). At 301–316 (QELKGRSRRRMMNVSN) the chain is on the cytoplasmic side. The chain crosses the membrane as a helical span at residues 317 to 337 (VSFFAMFIMYLLAALFGYLTF). Over 338-358 (YSKVEPELLHTYSKVFGAGVI) the chain is Extracellular. A helical transmembrane segment spans residues 359–379 (FVVVRLAVLMAVTLTVPIVIF). Thr-373 lines the Na(+) pocket. The Cytoplasmic segment spans residues 380 to 400 (PIRSSLNELFCSGKDFAWIRH). The chain crosses the membrane as a helical span at residues 401–421 (ILITFLILAFTNVLVIFVPTI). Over 422 to 423 (RD) the chain is Extracellular. Residues 424-444 (IFGFIGASAAAMLVFILPSAF) traverse the membrane as a helical segment. The Cytoplasmic segment spans residues 445–459 (YIRLVKKESMKSVQK). The chain crosses the membrane as a helical span at residues 460–482 (IGALLFLIGGIIVMIGSMTLIIL). Residues 483–493 (DWIHNSTSGGN) lie on the Extracellular side of the membrane.

This sequence belongs to the amino acid/polyamine transporter 2 family.

It localises to the cell membrane. The catalysed reaction is L-alanine(in) + Na(+)(in) = L-alanine(out) + Na(+)(out). It carries out the reaction glycine(in) + Na(+)(in) = glycine(out) + Na(+)(out). The enzyme catalyses L-serine(in) + Na(+)(in) = L-serine(out) + Na(+)(out). It catalyses the reaction L-proline(in) + Na(+)(in) = L-proline(out) + Na(+)(out). The catalysed reaction is L-methionine(in) + Na(+)(in) = L-methionine(out) + Na(+)(out). It carries out the reaction L-histidine(in) + Na(+)(in) = L-histidine(out) + Na(+)(out). The enzyme catalyses L-asparagine(in) + Na(+)(in) = L-asparagine(out) + Na(+)(out). It catalyses the reaction L-glutamine(in) + Na(+)(in) = L-glutamine(out) + Na(+)(out). The catalysed reaction is L-threonine(in) + Na(+)(in) = L-threonine(out) + Na(+)(out). It carries out the reaction L-leucine(in) + Na(+)(in) = L-leucine(out) + Na(+)(out). The enzyme catalyses L-phenylalanine(in) + Na(+)(in) = L-phenylalanine(out) + Na(+)(out). Its activity is regulated as follows. Inhibited by N-methyl-D-glucamine. Inhibited by choline. Allosteric regulation of sodium ions binding by pH. Symporter that cotransports neutral amino acids and sodium ions from the extracellular to the intracellular side of the cell membrane. The transport is pH-sensitive, Li(+)-intolerant, electrogenic, driven by the Na(+) electrochemical gradient and cotransports of neutral amino acids and sodium ions with a stoichiometry of 1:1. The polypeptide is Sodium-coupled neutral amino acid symporter 2 (Xenopus tropicalis (Western clawed frog)).